We begin with the raw amino-acid sequence, 425 residues long: Synaptotagmin-4 (425 aa).

Over 1–16 (MAPITTSRVEFDEIPT) the chain is Vesicular. Residues 17–37 (VVGIFSAFGLVFTVSLFAWIC) form a helical membrane-spanning segment. Residues 38–425 (CQRRSAKSNK…IAKWHMLCDG (388 aa)) are Cytoplasmic-facing. Positions 127–147 (TETEKEANSPESLKSSTSLTS) are disordered. Residue Ser-135 is modified to Phosphoserine; by MAPK8. Positions 137–146 (ESLKSSTSLT) are enriched in low complexity. C2 domains are found at residues 153 to 274 (KLGT…MLMT) and 287 to 420 (GRGE…AKWH). Ca(2+) is bound by residues Asp-246, Ser-249, and Asp-252.

Belongs to the synaptotagmin family. In terms of assembly, interacts with KIF1A; the interaction increases in presence of calcium and decreases when SYT4 is phosphorylated at Ser-135. Requires Ca(2+) as cofactor. In terms of processing, phosphorylation at Ser-135 by MAPK8/JNK1 reduces interaction with KIF1A and neuronal dense core vesicles mobility. As to expression, expressed in many regions of the nervous system but is undetectable in extra neural tissues.

It localises to the cytoplasmic vesicle. The protein localises to the secretory vesicle. Its subcellular location is the neuronal dense core vesicle membrane. In terms of biological role, synaptotagmin family member which does not bind Ca(2+). Plays a role in dendrite formation by melanocytes. Synaptotagmin family member which does not bind Ca(2+). Involved in neuronal dense core vesicles (DCVs) mobility through its interaction with KIF1A. Upon increased neuronal activity, phosphorylation by MAPK8/JNK1 destabilizes the interaction with KIF1A and captures DCVs to synapses. Plays a role in dendrite formation by melanocytes. This is Synaptotagmin-4 (Syt4) from Mus musculus (Mouse).